We begin with the raw amino-acid sequence, 248 residues long: Type III pantothenate kinase (248 aa).

6 to 13 (DCGNSFIK) lines the ATP pocket. Residues tyrosine 92 and 99 to 102 (GLDR) contribute to the substrate site. Aspartate 101 serves as the catalytic Proton acceptor. Aspartate 121 contacts K(+). Threonine 124 is an ATP binding site. Residue threonine 180 participates in substrate binding.

Belongs to the type III pantothenate kinase family. As to quaternary structure, homodimer. NH4(+) serves as cofactor. K(+) is required as a cofactor.

The protein resides in the cytoplasm. It carries out the reaction (R)-pantothenate + ATP = (R)-4'-phosphopantothenate + ADP + H(+). It participates in cofactor biosynthesis; coenzyme A biosynthesis; CoA from (R)-pantothenate: step 1/5. Catalyzes the phosphorylation of pantothenate (Pan), the first step in CoA biosynthesis. The protein is Type III pantothenate kinase of Ectopseudomonas mendocina (strain ymp) (Pseudomonas mendocina).